Reading from the N-terminus, the 318-residue chain is Deoxyhypusine hydroxylase (318 aa).

2 HEAT-like PBS-type repeats span residues 70-96 and 103-129; these read LKHE…VLEN and VRHE…YFKE. 8 residues coordinate Fe cation: histidine 72, glutamate 73, histidine 105, glutamate 106, histidine 231, glutamate 232, histidine 264, and glutamate 265. The HEAT-like PBS-type 3 repeat unit spans residues 262-288; sequence VRHEAAEALGSIATDECLPVLQSFLND.

This sequence belongs to the deoxyhypusine hydroxylase family. It depends on Fe(2+) as a cofactor.

The protein resides in the cytoplasm. The protein localises to the nucleus. It catalyses the reaction [eIF5A protein]-deoxyhypusine + AH2 + O2 = [eIF5A protein]-hypusine + A + H2O. It participates in protein modification; eIF5A hypusination. Its function is as follows. Catalyzes the hydroxylation of the N(6)-(4-aminobutyl)-L-lysine intermediate to form hypusine, an essential post-translational modification only found in mature eIF-5A factor. This chain is Deoxyhypusine hydroxylase, found in Candida albicans (strain SC5314 / ATCC MYA-2876) (Yeast).